The primary structure comprises 307 residues: Farnesol kinase, chloroplastic (307 aa).

A chloroplast-targeting transit peptide spans 1-65; that stretch reads MATTSTTTKL…TKIRKSSLAA (65 aa). 7 helical membrane-spanning segments follow: residues 77–97, 116–136, 137–157, 177–194, 197–217, 237–257, and 265–285; these read VCAF…WGEI, IGLV…GALF, ASLV…GVYH, GPLY…YYWK, PIAI…DIVG, IGMA…FASF, and GMIL…SLPI.

It belongs to the polyprenol kinase family.

The protein localises to the plastid. The protein resides in the chloroplast membrane. The catalysed reaction is (2E,6E)-farnesol + CTP = (2E,6E)-farnesyl phosphate + CDP + H(+). It carries out the reaction (2E,6E)-farnesol + ATP = (2E,6E)-farnesyl phosphate + ADP + H(+). It catalyses the reaction (2E)-geraniol + ATP = (2E)-geranyl phosphate + ADP + H(+). The enzyme catalyses (2E,6E,10E)-geranylgeraniol + ATP = (2E,6E,10E)-geranylgeranyl phosphate + ADP + H(+). Its function is as follows. Kinase involved in negative regulation of abscisic acid (ABA) signaling. Substrate preference is farnesol &gt; geraniol &gt; geranylgeraniol, but has no activity with farnesyl phosphate. Can use CTP &gt; ATP &gt; GTP = UTP as phosphoryl donor. The sequence is that of Farnesol kinase, chloroplastic from Arabidopsis thaliana (Mouse-ear cress).